Consider the following 98-residue polypeptide: NADH-ubiquinone oxidoreductase chain 4L (98 aa).

Transmembrane regions (helical) follow at residues 1–21 (MTMV…GLLM), 29–49 (SLLC…VTIL), and 61–81 (IILL…LVMV).

This sequence belongs to the complex I subunit 4L family. As to quaternary structure, core subunit of respiratory chain NADH dehydrogenase (Complex I) which is composed of 45 different subunits.

It localises to the mitochondrion inner membrane. The enzyme catalyses a ubiquinone + NADH + 5 H(+)(in) = a ubiquinol + NAD(+) + 4 H(+)(out). Functionally, core subunit of the mitochondrial membrane respiratory chain NADH dehydrogenase (Complex I) which catalyzes electron transfer from NADH through the respiratory chain, using ubiquinone as an electron acceptor. Part of the enzyme membrane arm which is embedded in the lipid bilayer and involved in proton translocation. This Mirounga angustirostris (Northern elephant seal) protein is NADH-ubiquinone oxidoreductase chain 4L (MT-ND4L).